A 126-amino-acid chain; its full sequence is Small ribosomal subunit protein uS12 (126 aa).

Residues 1–28 (MPTINQLVRKGRRKVRTKSKSPALDGNP) are disordered. Basic residues predominate over residues 9 to 19 (RKGRRKVRTKS). Asp89 carries the 3-methylthioaspartic acid modification. The disordered stretch occupies residues 106–126 (GVEKRRRSRSKYGVKRPKAAK). Residues 109 to 126 (KRRRSRSKYGVKRPKAAK) show a composition bias toward basic residues.

Belongs to the universal ribosomal protein uS12 family. Part of the 30S ribosomal subunit. Contacts proteins S8 and S17. May interact with IF1 in the 30S initiation complex.

With S4 and S5 plays an important role in translational accuracy. Functionally, interacts with and stabilizes bases of the 16S rRNA that are involved in tRNA selection in the A site and with the mRNA backbone. Located at the interface of the 30S and 50S subunits, it traverses the body of the 30S subunit contacting proteins on the other side and probably holding the rRNA structure together. The combined cluster of proteins S8, S12 and S17 appears to hold together the shoulder and platform of the 30S subunit. This Opitutus terrae (strain DSM 11246 / JCM 15787 / PB90-1) protein is Small ribosomal subunit protein uS12.